The following is a 631-amino-acid chain: tRNA uridine 5-carboxymethylaminomethyl modification enzyme MnmG (631 aa).

Residues 13–18 (GGGHAG), V125, and S180 each bind FAD. 273–287 (GPRYCPSIEDKVNRY) serves as a coordination point for NAD(+). Position 370 (Q370) interacts with FAD.

This sequence belongs to the MnmG family. In terms of assembly, homodimer. Heterotetramer of two MnmE and two MnmG subunits. FAD serves as cofactor.

The protein localises to the cytoplasm. In terms of biological role, NAD-binding protein involved in the addition of a carboxymethylaminomethyl (cmnm) group at the wobble position (U34) of certain tRNAs, forming tRNA-cmnm(5)s(2)U34. The chain is tRNA uridine 5-carboxymethylaminomethyl modification enzyme MnmG from Alcanivorax borkumensis (strain ATCC 700651 / DSM 11573 / NCIMB 13689 / SK2).